The primary structure comprises 86 residues: Putative membrane protein insertion efficiency factor (86 aa).

Positions 66–86 (AGGHDPVPPVPPQRYPSAQEH) are disordered.

This sequence belongs to the UPF0161 family.

Its subcellular location is the cell inner membrane. Its function is as follows. Could be involved in insertion of integral membrane proteins into the membrane. The chain is Putative membrane protein insertion efficiency factor from Nitratidesulfovibrio vulgaris (strain ATCC 29579 / DSM 644 / CCUG 34227 / NCIMB 8303 / VKM B-1760 / Hildenborough) (Desulfovibrio vulgaris).